The sequence spans 109 residues: Putative double-stranded DNA mimic protein YciU (109 aa).

Belongs to the putative dsDNA mimic protein family.

Its function is as follows. May act as a double-stranded DNA (dsDNA) mimic. Probably regulates the activity of a dsDNA-binding protein. The chain is Putative double-stranded DNA mimic protein YciU from Salmonella arizonae (strain ATCC BAA-731 / CDC346-86 / RSK2980).